The sequence spans 352 residues: tRNA uridine(34) hydroxylase (352 aa).

Residues 144 to 238 form the Rhodanese domain; the sequence is SDPDVILIDT…YLEEVPASDS (95 aa). Cys-198 functions as the Cysteine persulfide intermediate in the catalytic mechanism.

Belongs to the TrhO family.

It carries out the reaction uridine(34) in tRNA + AH2 + O2 = 5-hydroxyuridine(34) in tRNA + A + H2O. Functionally, catalyzes oxygen-dependent 5-hydroxyuridine (ho5U) modification at position 34 in tRNAs. The chain is tRNA uridine(34) hydroxylase from Psychrobacter arcticus (strain DSM 17307 / VKM B-2377 / 273-4).